Reading from the N-terminus, the 208-residue chain is Small ribosomal subunit protein uS4 (208 aa).

One can recognise an S4 RNA-binding domain in the interval 98–159; that stretch reads LRLDNVVFRL…RSKKVVRITE (62 aa).

It belongs to the universal ribosomal protein uS4 family. In terms of assembly, part of the 30S ribosomal subunit. Contacts protein S5. The interaction surface between S4 and S5 is involved in control of translational fidelity.

In terms of biological role, one of the primary rRNA binding proteins, it binds directly to 16S rRNA where it nucleates assembly of the body of the 30S subunit. Functionally, with S5 and S12 plays an important role in translational accuracy. This is Small ribosomal subunit protein uS4 from Anaeromyxobacter dehalogenans (strain 2CP-1 / ATCC BAA-258).